A 227-amino-acid polypeptide reads, in one-letter code: ATP synthase subunit a (227 aa).

5 helical membrane-spanning segments follow: residues 16 to 36, 79 to 99, 105 to 125, 176 to 196, and 202 to 222; these read AFVY…VAYI, LVAT…IPGF, SLNL…FEGI, LFLL…AFAL, and VLQT…AVAI.

Belongs to the ATPase A chain family. In terms of assembly, F-type ATPases have 2 components, CF(1) - the catalytic core - and CF(0) - the membrane proton channel. CF(1) has five subunits: alpha(3), beta(3), gamma(1), delta(1), epsilon(1). CF(0) has three main subunits: a(1), b(2) and c(9-12). The alpha and beta chains form an alternating ring which encloses part of the gamma chain. CF(1) is attached to CF(0) by a central stalk formed by the gamma and epsilon chains, while a peripheral stalk is formed by the delta and b chains.

Its subcellular location is the cell inner membrane. Functionally, key component of the proton channel; it plays a direct role in the translocation of protons across the membrane. The protein is ATP synthase subunit a of Campylobacter concisus (strain 13826).